Consider the following 163-residue polypeptide: MTTAAPDDSKNCIVAVTLDEESIGRSGPDIEHERAIAIYDLVEKNLFAPEGASEGPFTLHLGITGNRLMFDIRREDGTPVVAHLLSLSPFRRIVKDYFMICDSYYQAIRTATPDKIEAIDMGRRGIHDEGSRTLQERLAGKVRIDFETARRLFTLISVLHWKG.

This sequence belongs to the UPF0262 family.

This Rhodopseudomonas palustris (strain BisA53) protein is UPF0262 protein RPE_4483.